The sequence spans 325 residues: Phosphate acyltransferase (325 aa).

The protein belongs to the PlsX family. As to quaternary structure, homodimer. Probably interacts with PlsY.

The protein resides in the cytoplasm. It carries out the reaction a fatty acyl-[ACP] + phosphate = an acyl phosphate + holo-[ACP]. The protein operates within lipid metabolism; phospholipid metabolism. Catalyzes the reversible formation of acyl-phosphate (acyl-PO(4)) from acyl-[acyl-carrier-protein] (acyl-ACP). This enzyme utilizes acyl-ACP as fatty acyl donor, but not acyl-CoA. The protein is Phosphate acyltransferase of Staphylococcus epidermidis (strain ATCC 35984 / DSM 28319 / BCRC 17069 / CCUG 31568 / BM 3577 / RP62A).